The chain runs to 799 residues: METIGFMKNIETFAFPKQETVAMDDRAAASNFLGQPPVGGPPVKDLSALKRPASEMVKSHVGLFSPVKRRRHCGHSSVSDLARSASCVRSLAMKAKNTWMSNVPVMSSTHLVKRECPPVQGADLSDNLATASSPAHTGKGYTPFEDICLKQLLEVSRHKLFRSLEEVRGSDVRHDSRCDVPRAVRCRSLPSRMTPEKNSAEVSIGGLKDQSPSTSIRSNLVSSLLGVSRRDDQETSDSCHDDDDDRAINDSERYDVSECDESGPPTPSSGFIDIEADTPPCSPLNLTTTGGDSVSQLFHSSGHGVGDRQRNTASTDAKSSHIKSKSEDATKDKLGPCCCCGTTCSGGTCKEKKTNFSIDAILRPDFGSGNFLGQDGHTFQPNEDHQTVSSAQTTPRFSSPDSAFKVVDLRTRSRSESLSSPSSSSSSSRSSPSPPLTSPVSLRQKWERQTGSFMRRHLKGQEHFNFPQSLFPNPSKDLENFIGRDFPFISPPQGNPLVKFPNIFPDQLSHLHPAMPAECVDPRTFYYAPENFLSKGQQPLLSYDMSKLFGRSLHPFLNSPPKPQPQKRPGHHLAPTPVEGVTLKSVGTNHNPKVLPEVKTPVQSPQGDQKKRSRDESASKGKQVADQNVHLKENSQKSDPVLKQEKGNRKVSPAGASPETDKAKNPLWPAWVFCTRYSDRPSSGPRSRKPKRSKAQDEKRPRTAFTNDQLQRLKREFDECRYLTETRRKNLADELGLTESQIKIWFQNKRAKIKKSVGVRNPLALQLMEQGLYNHSTIKEMMEEGMYPHTPSQAGDDSS.

Disordered regions lie at residues L189–K331, G369–Q444, H554–K664, and S678–F705. Positions Q210–S222 are enriched in polar residues. Composition is skewed to basic and acidic residues over residues S228–C239 and R246–V256. 2 stretches are compositionally biased toward polar residues: residues L284 to H299 and H377 to D401. Over residues E416–S431 the composition is skewed to low complexity. Composition is skewed to basic and acidic residues over residues D608 to S619 and V629 to N648. A DNA-binding region (homeobox) is located at residues E698–V757.

This sequence belongs to the engrailed homeobox family. In terms of tissue distribution, expressed in the dorsal ectoderm of early gastrulae in a band corresponding to the peripheral area of the presumptive shell gland. Also expressed at four points along the posterior ectoderm. In late gastrulae, it is predominantly expressed in the peripheral ectoderm of the shell gland and in spots at the posterior end behind the presumptive foot. Expressed in late trochophore larvae at four points behind the foot, at two locations at the base of the foot and in the peripheral ectoderm of the shell gland.

Its subcellular location is the nucleus. Its function is as follows. May be involved in shell and shell gland formation during development. This Lymnaea stagnalis (Great pond snail) protein is Homeobox protein engrailed.